The following is a 329-amino-acid chain: 2-oxoglutarate-dependent dioxygenase htyE (329 aa).

In terms of domain architecture, Fe2OG dioxygenase spans N175–P289. Fe cation contacts are provided by H201, D203, and H261. Position 280 (R280) interacts with 2-oxoglutarate.

Belongs to the iron/ascorbate-dependent oxidoreductase family. The cofactor is Fe(2+).

The protein operates within antifungal biosynthesis. Functionally, 2-oxoglutarate-dependent dioxygenase; part of the gene cluster that mediates the de novo generation of L-homotyrosine from acetyl-CoA and 4-hydroxyphenyl-pyruvate. L-homotyrosine is a building block of echinocandin B, a fungal lipidated cyclic hexapeptide that acts as an antifungal agent. L-homotyrosine 4-hydroxyphenyl-pyruvate first undergoes an aldol-type condensation by htyA with the C-2 of acetyl-CoA followed by the release of CoA to form 2-(4-hydroxybenzyl)-malate. This is followed by isomerization of 2-(4-hydroxy-benzyl)-malate to 3-(4-hydroxybenzyl)-malate by htyD. Thereafter, 3-(4-hydroxybenzyl)-malate undergoes decarboxylation and oxidation to form 2-oxo-4-(4-hydroxybenzyl)butanoic acid, coupled to reduction of NAD(+) to NADH by htyC. The product then undergoes transamination catalyzed by htyB to form L-homotyrosine. This chain is 2-oxoglutarate-dependent dioxygenase htyE, found in Aspergillus rugulosus (Emericella rugulosa).